Here is a 249-residue protein sequence, read N- to C-terminus: MFSFFLENQTITDTLQTYIQRKLSPLGSPDYAYTVVSKKNPSNVLIISSYPDEWIRLYRANNFQLTDPVILTAFKRTSPFAWDENITLMSDLRFTKIFSLSKQYNIVNGFTYVLHDHMNNLALLSVIIKGNDQTALEQRLAAEQGTMQMLLIDFNEQMYRLAGTEGERAPALNQSADKTIFSSRENEVLYWASMGKTYAEIAAITGISVSTVKFHIKNVVVKLGVSNARQAIRLGVELDLIRPAASAAR.

One can recognise an HTH luxR-type domain in the interval 174-239 (QSADKTIFSS…QAIRLGVELD (66 aa)). The H-T-H motif DNA-binding region spans 198-217 (YAEIAAITGISVSTVKFHIK).

It belongs to the autoinducer-regulated transcriptional regulatory protein family.

In terms of biological role, functions as a potential OhlL-responsive transcriptional regulator. This chain is Transcriptional activator protein EsaR (esaR), found in Pantoea stewartii subsp. stewartii (Erwinia stewartii).